Here is a 249-residue protein sequence, read N- to C-terminus: CDP-diacylglycerol pyrophosphatase (249 aa).

The helical transmembrane segment at 7-27 (FLLAVVIVAAVAGIGYWKLAA) threads the bilayer.

Belongs to the Cdh family.

The protein resides in the cell inner membrane. The enzyme catalyses a CDP-1,2-diacyl-sn-glycerol + H2O = a 1,2-diacyl-sn-glycero-3-phosphate + CMP + 2 H(+). It participates in phospholipid metabolism; CDP-diacylglycerol degradation; phosphatidate from CDP-diacylglycerol: step 1/1. This Citrobacter koseri (strain ATCC BAA-895 / CDC 4225-83 / SGSC4696) protein is CDP-diacylglycerol pyrophosphatase.